We begin with the raw amino-acid sequence, 969 residues long: Isoleucine--tRNA ligase (969 aa).

Residues 68-78 (PYANGNLHMGH) carry the 'HIGH' region motif. An L-isoleucyl-5'-AMP-binding site is contributed by E584. Positions 625-629 (KMSKS) match the 'KMSKS' region motif. An ATP-binding site is contributed by K628. Residues C938, C941, C958, and C961 each coordinate Zn(2+).

Belongs to the class-I aminoacyl-tRNA synthetase family. IleS type 1 subfamily. In terms of assembly, monomer. It depends on Zn(2+) as a cofactor.

It is found in the cytoplasm. It carries out the reaction tRNA(Ile) + L-isoleucine + ATP = L-isoleucyl-tRNA(Ile) + AMP + diphosphate. Its function is as follows. Catalyzes the attachment of isoleucine to tRNA(Ile). As IleRS can inadvertently accommodate and process structurally similar amino acids such as valine, to avoid such errors it has two additional distinct tRNA(Ile)-dependent editing activities. One activity is designated as 'pretransfer' editing and involves the hydrolysis of activated Val-AMP. The other activity is designated 'posttransfer' editing and involves deacylation of mischarged Val-tRNA(Ile). This chain is Isoleucine--tRNA ligase, found in Prochlorococcus marinus (strain SARG / CCMP1375 / SS120).